A 311-amino-acid chain; its full sequence is Ribosomal RNA small subunit methyltransferase H (311 aa).

S-adenosyl-L-methionine contacts are provided by residues 41-43, D61, F85, D102, and Q109; that span reads GGH.

The protein belongs to the methyltransferase superfamily. RsmH family.

Its subcellular location is the cytoplasm. The catalysed reaction is cytidine(1402) in 16S rRNA + S-adenosyl-L-methionine = N(4)-methylcytidine(1402) in 16S rRNA + S-adenosyl-L-homocysteine + H(+). Functionally, specifically methylates the N4 position of cytidine in position 1402 (C1402) of 16S rRNA. The sequence is that of Ribosomal RNA small subunit methyltransferase H from Paracidovorax citrulli (strain AAC00-1) (Acidovorax citrulli).